The chain runs to 77 residues: Small ribosomal subunit protein bS18 (77 aa).

Belongs to the bacterial ribosomal protein bS18 family. As to quaternary structure, part of the 30S ribosomal subunit. Forms a tight heterodimer with protein bS6.

Binds as a heterodimer with protein bS6 to the central domain of the 16S rRNA, where it helps stabilize the platform of the 30S subunit. This is Small ribosomal subunit protein bS18 from Bacillus thuringiensis subsp. konkukian (strain 97-27).